We begin with the raw amino-acid sequence, 243 residues long: Phosphoribosylaminoimidazole-succinocarboxamide synthase (243 aa).

Belongs to the SAICAR synthetase family.

It catalyses the reaction 5-amino-1-(5-phospho-D-ribosyl)imidazole-4-carboxylate + L-aspartate + ATP = (2S)-2-[5-amino-1-(5-phospho-beta-D-ribosyl)imidazole-4-carboxamido]succinate + ADP + phosphate + 2 H(+). Its pathway is purine metabolism; IMP biosynthesis via de novo pathway; 5-amino-1-(5-phospho-D-ribosyl)imidazole-4-carboxamide from 5-amino-1-(5-phospho-D-ribosyl)imidazole-4-carboxylate: step 1/2. This chain is Phosphoribosylaminoimidazole-succinocarboxamide synthase, found in Methanobrevibacter smithii (strain ATCC 35061 / DSM 861 / OCM 144 / PS).